The chain runs to 291 residues: Proteasome subunit beta (291 aa).

Positions 1 to 56 (MTRSFPDRLPTNLAFPGISVINQSSFVDLLRRQAPELLPVSLGGGQSGGGQQLSHG) are cleaved as a propeptide — removed in mature form; by autocatalysis. Catalysis depends on Thr57, which acts as the Nucleophile.

This sequence belongs to the peptidase T1B family. The 20S proteasome core is composed of 14 alpha and 14 beta subunits that assemble into four stacked heptameric rings, resulting in a barrel-shaped structure. The two inner rings, each composed of seven catalytic beta subunits, are sandwiched by two outer rings, each composed of seven alpha subunits. The catalytic chamber with the active sites is on the inside of the barrel. Has a gated structure, the ends of the cylinder being occluded by the N-termini of the alpha-subunits. Is capped by the proteasome-associated ATPase, ARC.

It localises to the cytoplasm. It carries out the reaction Cleavage of peptide bonds with very broad specificity.. It functions in the pathway protein degradation; proteasomal Pup-dependent pathway. With respect to regulation, the formation of the proteasomal ATPase ARC-20S proteasome complex, likely via the docking of the C-termini of ARC into the intersubunit pockets in the alpha-rings, may trigger opening of the gate for substrate entry. Interconversion between the open-gate and close-gate conformations leads to a dynamic regulation of the 20S proteasome proteolysis activity. In terms of biological role, component of the proteasome core, a large protease complex with broad specificity involved in protein degradation. The sequence is that of Proteasome subunit beta from Mycobacterium leprae (strain Br4923).